The sequence spans 192 residues: Imidazoleglycerol-phosphate dehydratase (192 aa).

Belongs to the imidazoleglycerol-phosphate dehydratase family.

Its subcellular location is the cytoplasm. The catalysed reaction is D-erythro-1-(imidazol-4-yl)glycerol 3-phosphate = 3-(imidazol-4-yl)-2-oxopropyl phosphate + H2O. Its pathway is amino-acid biosynthesis; L-histidine biosynthesis; L-histidine from 5-phospho-alpha-D-ribose 1-diphosphate: step 6/9. The chain is Imidazoleglycerol-phosphate dehydratase from Methanocella arvoryzae (strain DSM 22066 / NBRC 105507 / MRE50).